Consider the following 1103-residue polypeptide: Retinal guanylyl cyclase 2 (1103 aa).

An N-terminal signal peptide occupies residues 1–46; sequence MFLAPWPFSHLMLWFVTLGRQRGQHGLASFKLLWCLWLLVLMSLPL. At 47–465 the chain is on the extracellular side; sequence QVWAPPYKIG…DGRICQGGIN (419 aa). Cys-104 and Cys-132 are disulfide-bonded. The chain crosses the membrane as a helical span at residues 466 to 490; that stretch reads PTFALMVCLALLIALLSINGFAYFI. Residues 491–1103 are Cytoplasmic-facing; sequence RHRINKIQLI…FQRRKQKSSW (613 aa). The 281-residue stretch at 532–812 folds into the Protein kinase domain; that stretch reads FQITSEVQSG…DEIFNQFKTF (281 aa). The region spanning 884 to 1014 is the Guanylate cyclase domain; the sequence is TLYFSDIVGF…DTVNTASRME (131 aa).

This sequence belongs to the adenylyl cyclase class-4/guanylyl cyclase family. As to quaternary structure, homodimer. Interacts with RD3; promotes the exit of GUCY2F from the endoplasmic reticulum and its trafficking to the photoreceptor outer segments. There are 9 conserved cysteine residues in sensory guanylate cyclases, 6 in the extracellular domain, which may be involved in intra- or interchain disulfide bonds. As to expression, expressed specifically in retina.

The protein localises to the membrane. The protein resides in the photoreceptor outer segment membrane. The enzyme catalyses GTP = 3',5'-cyclic GMP + diphosphate. With respect to regulation, activated by GUCA1B when free calcium ions concentration is low, and inhibited by GUCA1B when free calcium ions concentration is high. Inhibited by RD3. In terms of biological role, responsible for the synthesis of cyclic GMP (cGMP) in rods and cones of photoreceptors. Plays an essential role in phototransduction, by mediating cGMP replenishment. May also participate in the trafficking of membrane-asociated proteins to the photoreceptor outer segment membrane. This Bos taurus (Bovine) protein is Retinal guanylyl cyclase 2 (GUCY2F).